The chain runs to 360 residues: Phenylalanine--tRNA ligase alpha subunit (360 aa).

Residue glutamate 260 coordinates Mg(2+).

It belongs to the class-II aminoacyl-tRNA synthetase family. Phe-tRNA synthetase alpha subunit type 1 subfamily. Tetramer of two alpha and two beta subunits. Mg(2+) is required as a cofactor.

The protein resides in the cytoplasm. It catalyses the reaction tRNA(Phe) + L-phenylalanine + ATP = L-phenylalanyl-tRNA(Phe) + AMP + diphosphate + H(+). The sequence is that of Phenylalanine--tRNA ligase alpha subunit from Bradyrhizobium diazoefficiens (strain JCM 10833 / BCRC 13528 / IAM 13628 / NBRC 14792 / USDA 110).